Consider the following 230-residue polypeptide: Large ribosomal subunit protein uL1 (230 aa).

Belongs to the universal ribosomal protein uL1 family. Part of the 50S ribosomal subunit.

Binds directly to 23S rRNA. The L1 stalk is quite mobile in the ribosome, and is involved in E site tRNA release. In terms of biological role, protein L1 is also a translational repressor protein, it controls the translation of the L11 operon by binding to its mRNA. The sequence is that of Large ribosomal subunit protein uL1 from Caldicellulosiruptor bescii (strain ATCC BAA-1888 / DSM 6725 / KCTC 15123 / Z-1320) (Anaerocellum thermophilum).